The chain runs to 286 residues: Undecaprenyl-diphosphatase (286 aa).

Transmembrane regions (helical) follow at residues 50–70 (PGVS…IAYF), 97–117 (LGIA…AIKL), 127–147 (LRSV…LALA), 165–185 (GLLV…RSGS), 200–220 (AARF…LVEL), 230–250 (GGVL…WLAI), and 262–282 (TWVF…WWAG).

The protein belongs to the UppP family.

The protein localises to the cell inner membrane. The enzyme catalyses di-trans,octa-cis-undecaprenyl diphosphate + H2O = di-trans,octa-cis-undecaprenyl phosphate + phosphate + H(+). Catalyzes the dephosphorylation of undecaprenyl diphosphate (UPP). Confers resistance to bacitracin. This chain is Undecaprenyl-diphosphatase, found in Synechococcus sp. (strain WH7803).